The following is a 393-amino-acid chain: METFLFTSESVNEGHPDKLCDQISDAVLDACLQQDPDSKVACETCTKTNMVMVFGEITTKANVDYEKIVRDTCREIGFVSDDVGLDADNCKVLVNIEQQSPDIAQGVHGHLTKRPEEIGAGDQGHMFGYATDETPELMPLSHVLATKLGARLTEVRKNGTCPWLRPDGKTQVTVEYHNDGGARVPIRVHTVLISTQHDETVTNDEIAADLKEHVIKPVIPEKYLDEKTIFHLNPSGRFVIGGPHGDAGLTGRKIIIDTYGGWGAHGGGAFSGKDPTKVDRSGAYIVRQAAKSIVANGLARRCIVQVSYAIGVPEPLSVFVDTYGTGKIPDREILKIVKENFDFRPGMISINLDLKRGGNGRFLKTAAYGHFGRDDPDFTWEVVKPLKWEKTQA.

Glutamate 9 lines the Mg(2+) pocket. Histidine 15 is a binding site for ATP. Glutamate 43 provides a ligand contact to K(+). Residues glutamate 56 and glutamine 99 each coordinate L-methionine. ATP contacts are provided by residues 167 to 169, 235 to 238, aspartate 246, 252 to 253, alanine 269, lysine 273, and lysine 277; these read DGK, SGRF, and RK. Aspartate 246 contributes to the L-methionine binding site. Lysine 277 is an L-methionine binding site.

It belongs to the AdoMet synthase family. In terms of assembly, homotetramer. Requires Mn(2+) as cofactor. The cofactor is Mg(2+). It depends on Co(2+) as a cofactor. K(+) serves as cofactor.

It localises to the cytoplasm. The catalysed reaction is L-methionine + ATP + H2O = S-adenosyl-L-methionine + phosphate + diphosphate. It functions in the pathway amino-acid biosynthesis; S-adenosyl-L-methionine biosynthesis; S-adenosyl-L-methionine from L-methionine: step 1/1. In terms of biological role, catalyzes the formation of S-adenosylmethionine from methionine and ATP. The reaction comprises two steps that are both catalyzed by the same enzyme: formation of S-adenosylmethionine (AdoMet) and triphosphate, and subsequent hydrolysis of the triphosphate. The protein is S-adenosylmethionine synthase 2 (METK2) of Vitis vinifera (Grape).